A 447-amino-acid chain; its full sequence is N-succinylarginine dihydrolase (447 aa).

Residues 19–28 (AGLSFGNEAS), N110, and 137–138 (HR) contribute to the substrate site. E174 is a catalytic residue. R212 provides a ligand contact to substrate. Residue H248 is part of the active site. Substrate is bound by residues D250 and N359. C365 (nucleophile) is an active-site residue.

Belongs to the succinylarginine dihydrolase family. As to quaternary structure, homodimer.

The catalysed reaction is N(2)-succinyl-L-arginine + 2 H2O + 2 H(+) = N(2)-succinyl-L-ornithine + 2 NH4(+) + CO2. The protein operates within amino-acid degradation; L-arginine degradation via AST pathway; L-glutamate and succinate from L-arginine: step 2/5. Its function is as follows. Catalyzes the hydrolysis of N(2)-succinylarginine into N(2)-succinylornithine, ammonia and CO(2). In Escherichia coli (strain K12 / MC4100 / BW2952), this protein is N-succinylarginine dihydrolase.